Reading from the N-terminus, the 234-residue chain is Ribonuclease Trv (234 aa).

5 cysteine pairs are disulfide-bonded: C5–C24, C13–C59, C23–C125, C67–C117, and C189–C224. N15 is a glycosylation site (N-linked (GlcNAc...) asparagine). H52 is an active-site residue. Residue N75 is glycosylated (N-linked (GlcNAc...) asparagine). Active-site residues include E110 and H114.

Belongs to the RNase T2 family.

The catalysed reaction is a ribonucleotidyl-ribonucleotide-RNA + H2O = a 3'-end 3'-phospho-ribonucleotide-RNA + a 5'-end dephospho-ribonucleoside-RNA + H(+). In terms of biological role, this is a base non-specific and adenylic acid preferential ribonuclease. This is Ribonuclease Trv from Hypocrea rufa (Trichoderma viride).